The following is a 146-amino-acid chain: Large ribosomal subunit protein uL15 (146 aa).

Over residues 1–18 the composition is skewed to basic and acidic residues; it reads MKLHELKPTPGSRHERNR. The interval 1-69 is disordered; the sequence is MKLHELKPTP…RLPKRGFNNP (69 aa). A compositionally biased stretch (gly residues) spans 42–52; sequence SGGGVRPGFEG.

Belongs to the universal ribosomal protein uL15 family. In terms of assembly, part of the 50S ribosomal subunit.

Binds to the 23S rRNA. The polypeptide is Large ribosomal subunit protein uL15 (Exiguobacterium sp. (strain ATCC BAA-1283 / AT1b)).